A 554-amino-acid chain; its full sequence is Malate synthase 1 (554 aa).

Arg177 acts as the Proton acceptor in catalysis. Asp457 functions as the Proton donor in the catalytic mechanism. The SKL peroxisome targeting motif motif lies at 552-554 (SKL).

The protein belongs to the malate synthase family. Interacts with PEX9.

The protein localises to the peroxisome matrix. It catalyses the reaction glyoxylate + acetyl-CoA + H2O = (S)-malate + CoA + H(+). It participates in carbohydrate metabolism; glyoxylate cycle; (S)-malate from isocitrate: step 2/2. Malate synthase which takes part in the glyoxylate cycle. MLS1 activity is essential for cells to grow on oleic acid as a sole carbon source. Two steps of the glyoxylate cycle take place in the cytosol, the splitting of isocitrate into succinate and glyoxylate, and the dehydrogenation of malate to oxaloacetate. However, the formation of malate from glyoxylate and acetyl-CoA undertaken MLS1, occurs in the peroxisomes when cells are grown on oleic acid. The source of acetyl-CoA being either peroxisomal when breaking down fatty acids, or cytosolic when extra-cellular two-carbon substrates are used, therefore, although not strictly essential, the peroxisomal localization of MLS1 appears to be advantageous for cells growing on oleic acid, in that acetyl-CoA production and utilization are thereby intimately compartmentalized together to increase efficiency. The sequence is that of Malate synthase 1 from Saccharomyces cerevisiae (strain YJM789) (Baker's yeast).